The chain runs to 451 residues: UPF0210 protein NMB1652 (451 aa).

The protein belongs to the UPF0210 family. Homodimer.

The protein is UPF0210 protein NMB1652 of Neisseria meningitidis serogroup B (strain ATCC BAA-335 / MC58).